The primary structure comprises 247 residues: 14-3-3 protein gamma-B (247 aa).

This sequence belongs to the 14-3-3 family. As to quaternary structure, homodimer, and heterodimer with other family members.

The protein resides in the cytoplasm. Adapter protein implicated in the regulation of a large spectrum of both general and specialized signaling pathways. Binds to a large number of partners, usually by recognition of a phosphoserine or phosphothreonine motif. Binding generally results in the modulation of the activity of the binding partner. The chain is 14-3-3 protein gamma-B (ywhag-b) from Xenopus laevis (African clawed frog).